The chain runs to 613 residues: DNA mismatch repair protein MutL (613 aa).

This sequence belongs to the DNA mismatch repair MutL/HexB family.

This protein is involved in the repair of mismatches in DNA. It is required for dam-dependent methyl-directed DNA mismatch repair. May act as a 'molecular matchmaker', a protein that promotes the formation of a stable complex between two or more DNA-binding proteins in an ATP-dependent manner without itself being part of a final effector complex. The polypeptide is DNA mismatch repair protein MutL (Bradyrhizobium sp. (strain ORS 278)).